Reading from the N-terminus, the 289-residue chain is 4-diphosphocytidyl-2-C-methyl-D-erythritol kinase (289 aa).

K10 is a catalytic residue. P94 to S104 is an ATP binding site. The active site involves D136.

The protein belongs to the GHMP kinase family. IspE subfamily.

It carries out the reaction 4-CDP-2-C-methyl-D-erythritol + ATP = 4-CDP-2-C-methyl-D-erythritol 2-phosphate + ADP + H(+). It participates in isoprenoid biosynthesis; isopentenyl diphosphate biosynthesis via DXP pathway; isopentenyl diphosphate from 1-deoxy-D-xylulose 5-phosphate: step 3/6. In terms of biological role, catalyzes the phosphorylation of the position 2 hydroxy group of 4-diphosphocytidyl-2C-methyl-D-erythritol. This is 4-diphosphocytidyl-2-C-methyl-D-erythritol kinase from Geobacillus sp. (strain WCH70).